A 339-amino-acid polypeptide reads, in one-letter code: NmrA-like family domain-containing oxidoreductase notA (339 aa).

Residues 13 to 18 (GATGAQ), 39 to 43 (RKPDS), 60 to 61 (DG), 81 to 83 (TNS), Lys140, and 164 to 167 (YMGI) each bind NADP(+).

It belongs to the NmrA-type oxidoreductase family.

Functionally, nmrA-like family domain-containing oxidoreductase; part of the gene cluster that mediates the biosynthesis of notoamide, a fungal indole alkaloid that belongs to a family of natural products containing a characteristic bicyclo[2.2.2]diazaoctane core. The first step of notoamide biosynthesis involves coupling of L-proline and L-tryptophan by the bimodular NRPS notE, to produce cyclo-L-tryptophan-L-proline called brevianamide F. The reverse prenyltransferase notF then acts as a deoxybrevianamide E synthase and converts brevianamide F to deoxybrevianamide E via reverse prenylation at C-2 of the indole ring leading to the bicyclo[2.2.2]diazaoctane core. Deoxybrevianamide E is further hydroxylated at C-6 of the indole ring, likely catalyzed by the cytochrome P450 monooxygenase notG, to yield 6-hydroxy-deoxybrevianamide E. 6-hydroxy-deoxybrevianamide E is a specific substrate of the prenyltransferase notC for normal prenylation at C-7 to produce 6-hydroxy-7-prenyl-deoxybrevianamide, also called notoamide S. As the proposed pivotal branching point in notoamide biosynthesis, notoamide S can be diverted to notoamide E through an oxidative pyran ring closure putatively catalyzed by either notH cytochrome P450 monooxygenase or the notD FAD-linked oxidoreductase. This step would be followed by an indole 2,3-epoxidation-initiated pinacol-like rearrangement catalyzed by the notB FAD-dependent monooxygenase leading to the formation of notoamide C and notoamide D. On the other hand notoamide S is converted to notoamide T by notH (or notD), a bifunctional oxidase that also functions as the intramolecular Diels-Alderase responsible for generation of (+)-notoamide T. To generate antipodal (-)-notoaminide T, notH' (or notD') in Aspergillus versicolor is expected to catalyze a Diels-Alder reaction leading to the opposite stereochemistry. The remaining oxidoreductase notD (or notH) likely catalyzes the oxidative pyran ring formation to yield (+)-stephacidin A. The FAD-dependent monooxygenase notI is highly similar to notB and is predicted to catalyze a similar conversion from (+)-stephacidin A to (-)-notoamide B via the 2,3-epoxidation of (+)-stephacidin A followed by a pinacol-type rearrangement. Finally, it remains unclear which enzyme could be responsible for the final hydroxylation steps leading to notoamide A and sclerotiamide. The protein is NmrA-like family domain-containing oxidoreductase notA of Aspergillus sp. (strain MF297-2).